The sequence spans 641 residues: MANRPTELAAFIRSSGEADGWIEESFKEPYVAFNPDVLMYNDTLFNELLLSAHALKINSIQDVQSDDTVEDAGDIGNEVIHSELVTFIETAADVYALDRQCLVCRVLDMYRRNFGLSALWMADYAFLCSKCLGSPPCATATFIAAFEFVYIMDKHFLSDHGCTLVRSFGKKLLTLEDIQRHFFLHGCFRTDGGVPGRRHDEVITSRSKQGRLVGRRGKFSTAGDAKVLYSNYSYLAQSATRALLMTLSDLGSAPLEVIEGRQKSISGDVRNELRDGIESRKRVAHVIHSVGPVHSCPTTLSVALAGWKDCAKNVECNFFQLESCTLRASSEDNDYEHEWELRASEEKLNVVENVQDMQQIDASQCEHHEHARNEDCTMGYGNLVLLLLAGTGSAPEAASELAFMAAKVRRETVDIFWKNHRREFANDVTAAYSACYGEDSEPDLELGPLMITQLKHAITKGGTSAECLLCNLLLIRTYWLAMRKFKRDIITYSANNIGLFHSIEPVLDAWRSQGHRTDLGDEGCFVTLMKSAGTEAIYKHLFCDPMCAARIAQTNPRSLFDHPDATNHDELALYKARLASQNHFEGRVCAGLWALAYTFKTYQVFPPRPTALSAFVKDAGALLQRHSISLISLEHTLGVYV.

Positions 101, 104, 181, 187, 467, 470, 540, and 547 each coordinate Zn(2+). 2 zinc finger regions span residues 101–187 and 467–547; these read CLVC…LHGC and CLLC…DPMC.

It belongs to the herpesviridae UL32 protein family.

It localises to the host cytoplasm. Its subcellular location is the host nucleus. In terms of biological role, plays a role in efficient localization of neo-synthesized capsids to nuclear replication compartments, thereby controlling cleavage and packaging of virus genomic DNA. This Gallus gallus (Chicken) protein is Packaging protein UL32 homolog (MDV046).